The chain runs to 1365 residues: Polyprotein ABA-1 (1365 aa).

Belongs to the NPA family. Post-translationally, nematode polyprotein allergens (NPAs) are synthesized as large polypeptides that are subsequently proteolytically cleaved to active polypeptide units. As to expression, pseudocoelomic fluid.

Functionally, has high binding affinity for fatty acids and retinoids. In Ascaris suum (Pig roundworm), this protein is Polyprotein ABA-1 (ABA-1).